Consider the following 238-residue polypeptide: UDP-2,3-diacylglucosamine hydrolase (238 aa).

Mn(2+) is bound by residues Asp8, His10, Asp41, Asn78, and His113. Residue Asn78–Arg79 participates in substrate binding. Positions 121, 159, 163, 166, and 194 each coordinate substrate. Positions 194 and 196 each coordinate Mn(2+).

Belongs to the LpxH family. Requires Mn(2+) as cofactor.

It is found in the cell inner membrane. It carries out the reaction UDP-2-N,3-O-bis[(3R)-3-hydroxytetradecanoyl]-alpha-D-glucosamine + H2O = 2-N,3-O-bis[(3R)-3-hydroxytetradecanoyl]-alpha-D-glucosaminyl 1-phosphate + UMP + 2 H(+). It participates in glycolipid biosynthesis; lipid IV(A) biosynthesis; lipid IV(A) from (3R)-3-hydroxytetradecanoyl-[acyl-carrier-protein] and UDP-N-acetyl-alpha-D-glucosamine: step 4/6. Its function is as follows. Hydrolyzes the pyrophosphate bond of UDP-2,3-diacylglucosamine to yield 2,3-diacylglucosamine 1-phosphate (lipid X) and UMP by catalyzing the attack of water at the alpha-P atom. Involved in the biosynthesis of lipid A, a phosphorylated glycolipid that anchors the lipopolysaccharide to the outer membrane of the cell. This chain is UDP-2,3-diacylglucosamine hydrolase, found in Shewanella pealeana (strain ATCC 700345 / ANG-SQ1).